Consider the following 82-residue polypeptide: Large ribosomal subunit protein bL31B (82 aa).

The protein belongs to the bacterial ribosomal protein bL31 family. Type B subfamily. As to quaternary structure, part of the 50S ribosomal subunit.

The polypeptide is Large ribosomal subunit protein bL31B (Proteus mirabilis (strain HI4320)).